Consider the following 677-residue polypeptide: Protein hook (677 aa).

The Calponin-homology (CH) domain occupies 6–123 (NEMYYSLLEW…RLLQLVLGCA (118 aa)). 2 coiled-coil regions span residues 135-436 (EIMC…KCGH) and 478-588 (QTAL…AKEV).

This sequence belongs to the hook family. Homodimer. Interacts with microtubules via its N-terminus.

The protein resides in the cytoplasm. It localises to the cytoskeleton. It is found in the endosome. The protein localises to the synapse. Its function is as follows. Involved in endocytic trafficking by stabilizing organelles of the endocytic pathway. Probably acts as a cytoskeletal linker protein required to tether endosome vesicles to the cytoskeleton. Involved in modulation of endocytosis at stages required for down-regulation of membrane proteins that control synapse size. Not involved in synaptic vesicle recycling. Required in R7 cells for boss endocytosis into multivesicular bodies (MVBs). Has a role in regulating adult longevity. This Drosophila pseudoobscura pseudoobscura (Fruit fly) protein is Protein hook.